The sequence spans 445 residues: 2-oxoisovalerate dehydrogenase subunit alpha, mitochondrial (445 aa).

The transit peptide at 1-45 (MAVAIAAARVWRLNRGLSQAALLLLRQPGARGLARSHPPRQQQQF) directs the protein to the mitochondrion. Residues 33-52 (LARSHPPRQQQQFSSLDDKP) form a disordered region. Thiamine diphosphate-binding residues include tyrosine 158 and arginine 159. Serine 206 lines the K(+) pocket. Serine 207 contacts thiamine diphosphate. Residues proline 208, threonine 211, and glutamine 212 each coordinate K(+). Glutamate 238 lines the Mg(2+) pocket. Positions 239, 240, and 265 each coordinate thiamine diphosphate. 2 residues coordinate Mg(2+): asparagine 267 and tyrosine 269. A thiamine diphosphate-binding site is contributed by histidine 336. Residue serine 337 is modified to Phosphoserine; by BCKDK. Residue threonine 338 is modified to Phosphothreonine. A phosphoserine mark is found at serine 339 and serine 347. Lysine 356 carries the N6-acetyllysine; alternate modification. Lysine 356 carries the N6-succinyllysine; alternate modification. The residue at position 380 (lysine 380) is an N6-succinyllysine.

The protein belongs to the BCKDHA family. As to quaternary structure, heterotetramer of 2 alpha/BCKDHA and 2 beta chains/BCKDHB that forms the branched-chain alpha-keto acid decarboxylase (E1) component of the BCKD complex. The branched-chain alpha-ketoacid dehydrogenase is a large complex composed of three major building blocks E1, E2 and E3. It is organized around E2, a 24-meric cubic core composed of DBT, to which are associated 6 to 12 copies of E1, and approximately 6 copies of the dehydrogenase E3, a DLD dimer. Interacts with PPM1K. Thiamine diphosphate is required as a cofactor. Mg(2+) serves as cofactor. In terms of processing, phosphorylated at Ser-337 by BCKDK and dephosphorylated by protein phosphatase PPM1K.

The protein localises to the mitochondrion matrix. It carries out the reaction N(6)-[(R)-lipoyl]-L-lysyl-[protein] + 3-methyl-2-oxobutanoate + H(+) = N(6)-[(R)-S(8)-2-methylpropanoyldihydrolipoyl]-L-lysyl-[protein] + CO2. Functionally, together with BCKDHB forms the heterotetrameric E1 subunit of the mitochondrial branched-chain alpha-ketoacid dehydrogenase (BCKD) complex. The BCKD complex catalyzes the multi-step oxidative decarboxylation of alpha-ketoacids derived from the branched-chain amino-acids valine, leucine and isoleucine producing CO2 and acyl-CoA which is subsequently utilized to produce energy. The E1 subunit catalyzes the first step with the decarboxylation of the alpha-ketoacid forming an enzyme-product intermediate. A reductive acylation mediated by the lipoylamide cofactor of E2 extracts the acyl group from the E1 active site for the next step of the reaction. This chain is 2-oxoisovalerate dehydrogenase subunit alpha, mitochondrial, found in Homo sapiens (Human).